Reading from the N-terminus, the 559-residue chain is Dihydroxy-acid dehydratase (559 aa).

Cys-49 is a [2Fe-2S] cluster binding site. Asp-81 lines the Mg(2+) pocket. [2Fe-2S] cluster is bound at residue Cys-122. Asp-123 and Lys-124 together coordinate Mg(2+). An N6-carboxylysine modification is found at Lys-124. Residue Cys-194 participates in [2Fe-2S] cluster binding. Glu-446 contributes to the Mg(2+) binding site. Ser-472 acts as the Proton acceptor in catalysis.

The protein belongs to the IlvD/Edd family. As to quaternary structure, homodimer. [2Fe-2S] cluster is required as a cofactor. Requires Mg(2+) as cofactor.

The enzyme catalyses (2R)-2,3-dihydroxy-3-methylbutanoate = 3-methyl-2-oxobutanoate + H2O. It carries out the reaction (2R,3R)-2,3-dihydroxy-3-methylpentanoate = (S)-3-methyl-2-oxopentanoate + H2O. The protein operates within amino-acid biosynthesis; L-isoleucine biosynthesis; L-isoleucine from 2-oxobutanoate: step 3/4. It participates in amino-acid biosynthesis; L-valine biosynthesis; L-valine from pyruvate: step 3/4. Functions in the biosynthesis of branched-chain amino acids. Catalyzes the dehydration of (2R,3R)-2,3-dihydroxy-3-methylpentanoate (2,3-dihydroxy-3-methylvalerate) into 2-oxo-3-methylpentanoate (2-oxo-3-methylvalerate) and of (2R)-2,3-dihydroxy-3-methylbutanoate (2,3-dihydroxyisovalerate) into 2-oxo-3-methylbutanoate (2-oxoisovalerate), the penultimate precursor to L-isoleucine and L-valine, respectively. The sequence is that of Dihydroxy-acid dehydratase from Prochlorococcus marinus (strain MIT 9515).